Reading from the N-terminus, the 334-residue chain is Protein POLAR-like 1 (334 aa).

Basic and acidic residues predominate over residues 53–63 (IRTSSEDDHHR). The tract at residues 53–74 (IRTSSEDDHHRVGQFSDSPPPT) is disordered. Residues 273–300 (ETRQQEEIKELEIALDDAKQRLHLKETE) are a coiled coil.

The protein resides in the cytoplasm. It localises to the cell cortex. In terms of biological role, acts as a stomatal lineage scaffold which regulates subcellular localization and transient polarization of kinases (e.g. ASK7/BIN2 and ASK3/SK12) involved in asymmetric cell division (ACD) in a BASL-dependent manner. The protein is Protein POLAR-like 1 of Arabidopsis thaliana (Mouse-ear cress).